We begin with the raw amino-acid sequence, 411 residues long: 2,3-bisphosphoglycerate-independent phosphoglycerate mutase (411 aa).

Belongs to the BPG-independent phosphoglycerate mutase family. A-PGAM subfamily.

It catalyses the reaction (2R)-2-phosphoglycerate = (2R)-3-phosphoglycerate. Its pathway is carbohydrate degradation; glycolysis; pyruvate from D-glyceraldehyde 3-phosphate: step 3/5. Functionally, catalyzes the interconversion of 2-phosphoglycerate and 3-phosphoglycerate. In Thermococcus kodakarensis (strain ATCC BAA-918 / JCM 12380 / KOD1) (Pyrococcus kodakaraensis (strain KOD1)), this protein is 2,3-bisphosphoglycerate-independent phosphoglycerate mutase.